The chain runs to 274 residues: Large ribosomal subunit protein uL2 (274 aa).

Residues 224–256 (AMNPIDHPHGGGEGRTGEGRHAVDPWGNLTKGY) are disordered. Residues 229–246 (DHPHGGGEGRTGEGRHAV) show a composition bias toward basic and acidic residues.

It belongs to the universal ribosomal protein uL2 family. Part of the 50S ribosomal subunit. Forms a bridge to the 30S subunit in the 70S ribosome.

One of the primary rRNA binding proteins. Required for association of the 30S and 50S subunits to form the 70S ribosome, for tRNA binding and peptide bond formation. It has been suggested to have peptidyltransferase activity; this is somewhat controversial. Makes several contacts with the 16S rRNA in the 70S ribosome. This chain is Large ribosomal subunit protein uL2, found in Acidovorax ebreus (strain TPSY) (Diaphorobacter sp. (strain TPSY)).